Consider the following 385-residue polypeptide: A-type ATP synthase subunit C (385 aa).

Belongs to the V-ATPase V0D/AC39 subunit family. In terms of assembly, has multiple subunits with at least A(3), B(3), C, D, E, F, H, I and proteolipid K(x).

Its subcellular location is the cell membrane. Its function is as follows. Component of the A-type ATP synthase that produces ATP from ADP in the presence of a proton gradient across the membrane. This chain is A-type ATP synthase subunit C, found in Methanothermobacter thermautotrophicus (strain ATCC 29096 / DSM 1053 / JCM 10044 / NBRC 100330 / Delta H) (Methanobacterium thermoautotrophicum).